A 232-amino-acid polypeptide reads, in one-letter code: Fibrillarin-like rRNA/tRNA 2'-O-methyltransferase (232 aa).

Residues 89 to 90 (TT), 108 to 109 (EF), 133 to 134 (DA), and 153 to 156 (DIAQ) contribute to the S-adenosyl-L-methionine site.

Belongs to the methyltransferase superfamily. Fibrillarin family. In terms of assembly, interacts with nop5. Component of box C/D small ribonucleoprotein (sRNP) particles that contain rpl7ae, FlpA and nop5, plus a guide RNA.

In terms of biological role, involved in pre-rRNA and tRNA processing. Utilizes the methyl donor S-adenosyl-L-methionine to catalyze the site-specific 2'-hydroxyl methylation of ribose moieties in rRNA and tRNA. Site specificity is provided by a guide RNA that base pairs with the substrate. Methylation occurs at a characteristic distance from the sequence involved in base pairing with the guide RNA. The chain is Fibrillarin-like rRNA/tRNA 2'-O-methyltransferase from Saccharolobus islandicus (strain M.16.27) (Sulfolobus islandicus).